A 200-amino-acid polypeptide reads, in one-letter code: Cuticle protein 19.8 (200 aa).

3 tandem repeats follow at residues 20 to 23 (AAPA), 26 to 29 (AAPA), and 43 to 46 (AAPA). The 72-residue stretch at 56–127 (HPQYSYGYSV…EPGVHAPIAA (72 aa)) folds into the Chitin-binding type R&amp;R domain. Residues 70–89 (TGDSKSQQESRDGDVVQGSY) form a disordered region. Tandem repeats lie at residues 126-129 (AAPV), 144-147 (AAPA), 150-153 (AAPV), 159-162 (AAPA), and 177-180 (AAPA).

Component of the cuticle of migratory locust which contains more than 100 different structural proteins. In Locusta migratoria (Migratory locust), this protein is Cuticle protein 19.8.